The primary structure comprises 210 residues: ATP-dependent Clp protease proteolytic subunit (210 aa).

The active-site Nucleophile is Ser107. His132 is a catalytic residue.

The protein belongs to the peptidase S14 family. As to quaternary structure, fourteen ClpP subunits assemble into 2 heptameric rings which stack back to back to give a disk-like structure with a central cavity, resembling the structure of eukaryotic proteasomes.

It localises to the cytoplasm. It carries out the reaction Hydrolysis of proteins to small peptides in the presence of ATP and magnesium. alpha-casein is the usual test substrate. In the absence of ATP, only oligopeptides shorter than five residues are hydrolyzed (such as succinyl-Leu-Tyr-|-NHMec, and Leu-Tyr-Leu-|-Tyr-Trp, in which cleavage of the -Tyr-|-Leu- and -Tyr-|-Trp bonds also occurs).. In terms of biological role, cleaves peptides in various proteins in a process that requires ATP hydrolysis. Has a chymotrypsin-like activity. Plays a major role in the degradation of misfolded proteins. The polypeptide is ATP-dependent Clp protease proteolytic subunit (Zymomonas mobilis subsp. mobilis (strain ATCC 31821 / ZM4 / CP4)).